The primary structure comprises 284 residues: MTIVNLAAYHFVSLDTNEQWRPLVTARCNELGLRGTILLAPEGINLFIAGTREAADAFIAYLRHDPLFEGKFATLQFKESLSDSQPFRRMLVRLKREIITMKKPAIKPELGRAPFVDAQTLKTWLDRGHDDTGRPVVMLDTRNAFEVDVGTFDDALDYRIDKFSEFPEVIDANRADLEGKTVVSFCTGGIRCEKAAIHMKEIGIENVYQLEGGILKYFEEVGGAHYHGDCFVFDYRTALNPQLQPTENVTCFACRAVVTPEAQQSPSFVPGQSCPACAPAASAA.

The Rhodanese domain occupies 132–226 (TGRPVVMLDT…YFEEVGGAHY (95 aa)). The Cysteine persulfide intermediate role is filled by Cys186.

The protein belongs to the TrhO family.

It carries out the reaction uridine(34) in tRNA + AH2 + O2 = 5-hydroxyuridine(34) in tRNA + A + H2O. Its function is as follows. Catalyzes oxygen-dependent 5-hydroxyuridine (ho5U) modification at position 34 in tRNAs. The sequence is that of tRNA uridine(34) hydroxylase from Burkholderia lata (strain ATCC 17760 / DSM 23089 / LMG 22485 / NCIMB 9086 / R18194 / 383).